The following is a 146-amino-acid chain: Large ribosomal subunit protein uL15 (146 aa).

The tract at residues 1 to 46 is disordered; sequence MAIELHDLKPAPGAHKAKTRVGRGEGSKGKTAGRGTKGTGARKNVP. Positions 29-43 are enriched in low complexity; that stretch reads GKTAGRGTKGTGARK.

The protein belongs to the universal ribosomal protein uL15 family. As to quaternary structure, part of the 50S ribosomal subunit.

Binds to the 23S rRNA. This Cutibacterium acnes (strain DSM 16379 / KPA171202) (Propionibacterium acnes) protein is Large ribosomal subunit protein uL15.